The primary structure comprises 288 residues: Mortality factor 4-like protein 2 (288 aa).

The segment covering 1–15 (MSSRKQASQTRGQQS) has biased composition (polar residues). The tract at residues 1-115 (MSSRKQASQT…DPTVESEEAF (115 aa)) is disordered. The residue at position 71 (Ser71) is a Phosphoserine. One can recognise an MRG domain in the interval 117–288 (SRMEVKVKIP…ASADYHRKAL (172 aa)).

In terms of assembly, component of the NuA4 histone acetyltransferase complex which contains the catalytic subunit KAT5/TIP60 and the subunits EP400, TRRAP/PAF400, BRD8/SMAP, EPC1, DMAP1/DNMAP1, RUVBL1/TIP49, RUVBL2, ING3, actin, ACTL6A/BAF53A, MORF4L1/MRG15, MORF4L2/MRGX, MRGBP, YEATS4/GAS41 and VPS72/YL1. The NuA4 complex interacts with MYC and the adenovirus E1A protein. MORF4L1 may also participate in the formation of NuA4 related complexes which lack the KAT5/TIP60 catalytic subunit, but which include the SWI/SNF related protein SRCAP. Component of the MSIN3A histone deacetylase complex, which includes SIN3A, HDAC2, ARID4B, MORF4L1, RBBP4/RbAp48, and RBBP7/RbAp46. Interacts with MRFAP1 and RB1. May also interact with one or more as yet undefined members of the TLE (transducin-like enhancer of split) family of transcriptional repressors.

It localises to the nucleus. Component of the NuA4 histone acetyltransferase complex which is involved in transcriptional activation of select genes principally by acetylation of nucleosomal histone H4 and H2A. This modification may both alter nucleosome - DNA interactions and promote interaction of the modified histones with other proteins which positively regulate transcription. This complex may be required for the activation of transcriptional programs associated with oncogene and proto-oncogene mediated growth induction, tumor suppressor mediated growth arrest and replicative senescence, apoptosis, and DNA repair. The NuA4 complex ATPase and helicase activities seem to be, at least in part, contributed by the association of RUVBL1 and RUVBL2 with EP400. NuA4 may also play a direct role in DNA repair when directly recruited to sites of DNA damage. Also a component of the MSIN3A complex which acts to repress transcription by deacetylation of nucleosomal histones. The polypeptide is Mortality factor 4-like protein 2 (Morf4l2) (Rattus norvegicus (Rat)).